A 79-amino-acid polypeptide reads, in one-letter code: Small ribosomal subunit protein uS17 (79 aa).

The protein belongs to the universal ribosomal protein uS17 family. As to quaternary structure, part of the 30S ribosomal subunit.

In terms of biological role, one of the primary rRNA binding proteins, it binds specifically to the 5'-end of 16S ribosomal RNA. This chain is Small ribosomal subunit protein uS17, found in Bartonella quintana (strain Toulouse) (Rochalimaea quintana).